Here is a 329-residue protein sequence, read N- to C-terminus: Cytosolic arginine sensor for mTORC1 subunit 1 (329 aa).

Residue Ser14 is modified to Phosphoserine. ACT domains lie at 72–138 (AEAT…HTLA) and 260–321 (GELW…EVLQ). Residues 111–112 (SV), Gly274, 280–281 (IV), and 300–304 (TFNFD) each bind L-arginine.

The protein belongs to the GATS family. Forms homodimers and heterodimers with CASTOR2. Interacts with the GATOR2 complex which is composed of MIOS, SEC13, SEH1L, WDR24 and WDR59; the interaction is negatively regulated by arginine. Interacts with TM4SF5; the interaction is positively regulated by leucine and is negatively regulated by arginine. In terms of processing, phosphorylation at Ser-14 by AKT1, promoting the interaction between CASTOR1 and RNF167. Post-translationally, ubiquitinated by RNF167 via 'Lys-29'-polyubiquitination, leading to its degradation, releasing the GATOR2 complex. Ubiquitination by RNF167 is promoted by phosphorylation at Ser-14 by AKT1.

It is found in the cytoplasm. Its subcellular location is the cytosol. In terms of biological role, functions as an intracellular arginine sensor within the amino acid-sensing branch of the TORC1 signaling pathway. As a homodimer or a heterodimer with CASTOR2, binds and inhibits the GATOR subcomplex GATOR2 and thereby mTORC1. Binding of arginine to CASTOR1 allosterically disrupts the interaction of CASTOR1-containing dimers with GATOR2 which can in turn activate mTORC1 and the TORC1 signaling pathway. This is Cytosolic arginine sensor for mTORC1 subunit 1 from Pongo abelii (Sumatran orangutan).